Here is a 120-residue protein sequence, read N- to C-terminus: Putative monooxygenase GME11364 (120 aa).

Positions 9 to 99 (VSVHIRLTVD…ILLKPHEVEL (91 aa)) constitute an ABM domain.

The protein belongs to the LsrG family.

It functions in the pathway secondary metabolite biosynthesis. Its function is as follows. Putative monooxygenase; part of the gene cluster that mediates the biosynthesis of dibenzodioxocinones such as pestalotiollide B, a novel class of inhibitors against cholesterol ester transfer protein (CEPT). The biosynthesis initiates from condensation of acetate and malonate units catalyzed by the non-reducing PKS pks8/GME11356. Pks8/GME11356 lacks a thioesterase (TE) domain, which is important to the cyclizing of the third ring of atrochrysone carboxylic acid, and the esterase GME11355 might play the role of TE and catalyzes the cyclization reaction of the C ring. The lactamase-like protein GME11357 (or other beta-lactamases in Pestalotiopsis microspora) probably hydrolyzes the thioester bond between the ACP of pks8/GME11356 and the intermediate to release atrochrysone carboxylic acid, which is spontaneously dehydrates to form endocrocin anthrone. Endocrocin anthrone is further converted to emodin via the endocrocin intermediate. Emodin is then oxidized by several enzymes such as the Baeyer-Villiger oxidase GME11358, the oxidoreductase GME11367, the short chain dehydrogenase/reductase GME11373, as well as by other oxidoreductases from the cluster, to modify the A and C rings and open the B ring, and finally yield monodictyphenone. The prenyltransferase GME11375 may catalyze the addition reaction between the C5 side chains and the carbon bone of dibenzodioxocinones. The remaining biochemical reactions to the final product dibenzodioxocinones should be methylation catalyzed by methyltransferase GME11366 and reduction and lactonization reaction catalyzed by a series of oxidordeuctases. This Pestalotiopsis microspora protein is Putative monooxygenase GME11364.